We begin with the raw amino-acid sequence, 41 residues long: Large ribosomal subunit protein bL36 (41 aa).

Belongs to the bacterial ribosomal protein bL36 family.

The protein is Large ribosomal subunit protein bL36 of Xylella fastidiosa (strain M23).